The primary structure comprises 400 residues: Acetate kinase (400 aa).

A Mg(2+)-binding site is contributed by asparagine 10. Lysine 17 is a binding site for ATP. Arginine 91 lines the substrate pocket. Aspartate 150 (proton donor/acceptor) is an active-site residue. ATP contacts are provided by residues histidine 210 to glycine 214, aspartate 285 to arginine 287, and glycine 333 to asparagine 337. Residue glutamate 387 participates in Mg(2+) binding.

It belongs to the acetokinase family. Homodimer. It depends on Mg(2+) as a cofactor. Requires Mn(2+) as cofactor.

The protein localises to the cytoplasm. It carries out the reaction acetate + ATP = acetyl phosphate + ADP. It functions in the pathway metabolic intermediate biosynthesis; acetyl-CoA biosynthesis; acetyl-CoA from acetate: step 1/2. In terms of biological role, catalyzes the formation of acetyl phosphate from acetate and ATP. Can also catalyze the reverse reaction. The protein is Acetate kinase of Escherichia coli O157:H7.